We begin with the raw amino-acid sequence, 957 residues long: Dystrophin-related protein 2 (957 aa).

2 Spectrin repeats span residues 102-179 (DHSG…EELE) and 231-337 (EQLL…QLQD). In terms of domain architecture, WW spans 358-383 (WERAISPNKVPYYINHQAQTTCWDHP). The segment at 605–661 (KHQTKCSICRQCPIKGFRYRSLKQFNVDICQTCFLTGRASKGNKLHYPIMEYYTPTT) adopts a ZZ-type; degenerate zinc-finger fold. Cys-610, Cys-613, Cys-634, and Cys-637 together coordinate Zn(2+). Ser-748 is modified (phosphoserine). Positions 877-900 (PPTESDGSGSAGSSLASSPQQSEG) are enriched in low complexity. A disordered region spans residues 877–923 (PPTESDGSGSAGSSLASSPQQSEGSHPREKGQTTPDTEAADDVGSKS). Thr-910 bears the Phosphothreonine mark.

Interacts with PRX; this enhances phosphorylation. Identified in a dystroglycan complex that contains at least PRX, DRP2, UTRN, DMD and DAG1. In terms of tissue distribution, detected in fetal brain.

The protein localises to the postsynaptic density. It is found in the cell projection. The protein resides in the dendrite. It localises to the perikaryon. Its subcellular location is the cell membrane. Its function is as follows. Required for normal myelination and for normal organization of the cytoplasm and the formation of Cajal bands in myelinating Schwann cells. Required for normal PRX location at appositions between the abaxonal surface of the myelin sheath and the Schwann cell plasma membrane. Possibly involved in membrane-cytoskeleton interactions of the central nervous system. This is Dystrophin-related protein 2 (DRP2) from Homo sapiens (Human).